Consider the following 182-residue polypeptide: Prorelaxin (182 aa).

Residues Met-1 to Gly-24 form the signal peptide. The residue at position 25 (Gln-25) is a Pyrrolidone carboxylic acid. Cystine bridges form between Cys-34–Cys-169, Cys-46–Cys-182, and Cys-168–Cys-173. The propeptide at Ser-57–Ser-154 is connecting peptide. The propeptide occupies Leu-159–Phe-160.

The protein belongs to the insulin family. Heterodimer of a B chain and an A chain linked by two disulfide bonds.

The protein localises to the secreted. In terms of biological role, relaxin is an ovarian hormone that acts with estrogen to produce dilatation of the birth canal in many mammals. This Sus scrofa (Pig) protein is Prorelaxin (RLN).